Here is a 309-residue protein sequence, read N- to C-terminus: Mitochondrial import receptor subunit TOM34 (309 aa).

Serine 8 carries the post-translational modification Phosphoserine. TPR repeat units follow at residues 9–42 (VEQL…LQAR), 51–84 (SVLY…VPFS), and 86–118 (KPLL…DNSV). The interval 158–187 (WSSLPSENHKETAKSKSKETTATKNRVPSA) is disordered. Serine 160 bears the Phosphoserine mark. Residues 164–178 (ENHKETAKSKSKETT) show a composition bias toward basic and acidic residues. Residue serine 186 is modified to Phosphoserine. TPR repeat units follow at residues 193 to 226 (ARVL…SSLE), 227 to 260 (SATY…DGKN), and 262 to 294 (KAFY…EPRN). A Glycyl lysine isopeptide (Lys-Gly) (interchain with G-Cter in SUMO2) cross-link involves residue lysine 197.

It belongs to the Tom34 family. Interacts with HSP90A, VCP, ATP6V1D, KIAA0665, AMPK, and DMAP1 through its TPR repeat.

The protein localises to the cytoplasm. It localises to the mitochondrion outer membrane. Functionally, plays a role in the import of cytosolically synthesized preproteins into mitochondria. Binds the mature portion of precursor proteins. Interacts with cellular components, and possesses weak ATPase activity. May be a chaperone-like protein that helps to keep newly synthesized precursors in an unfolded import compatible state. This chain is Mitochondrial import receptor subunit TOM34 (Tomm34), found in Rattus norvegicus (Rat).